A 260-amino-acid polypeptide reads, in one-letter code: Cytochrome c oxidase subunit 3 (260 aa).

The next 6 membrane-spanning stretches (helical) occupy residues 41-61 (LTLV…RDII), 81-101 (GMIL…WAFF), 133-153 (TGVL…ILAG), 161-181 (ALFL…WEYI), 196-216 (FFVA…FLMV), and 238-258 (AWYW…IYWW).

This sequence belongs to the cytochrome c oxidase subunit 3 family. As to quaternary structure, component of the cytochrome c oxidase (complex IV, CIV), a multisubunit enzyme composed of a catalytic core of 3 subunits and several supernumerary subunits. The complex exists as a monomer or a dimer and forms supercomplexes (SCs) in the inner mitochondrial membrane with ubiquinol-cytochrome c oxidoreductase (cytochrome b-c1 complex, complex III, CIII).

The protein localises to the mitochondrion inner membrane. The catalysed reaction is 4 Fe(II)-[cytochrome c] + O2 + 8 H(+)(in) = 4 Fe(III)-[cytochrome c] + 2 H2O + 4 H(+)(out). In terms of biological role, component of the cytochrome c oxidase, the last enzyme in the mitochondrial electron transport chain which drives oxidative phosphorylation. The respiratory chain contains 3 multisubunit complexes succinate dehydrogenase (complex II, CII), ubiquinol-cytochrome c oxidoreductase (cytochrome b-c1 complex, complex III, CIII) and cytochrome c oxidase (complex IV, CIV), that cooperate to transfer electrons derived from NADH and succinate to molecular oxygen, creating an electrochemical gradient over the inner membrane that drives transmembrane transport and the ATP synthase. Cytochrome c oxidase is the component of the respiratory chain that catalyzes the reduction of oxygen to water. Electrons originating from reduced cytochrome c in the intermembrane space (IMS) are transferred via the dinuclear copper A center (CU(A)) of subunit 2 and heme A of subunit 1 to the active site in subunit 1, a binuclear center (BNC) formed by heme A3 and copper B (CU(B)). The BNC reduces molecular oxygen to 2 water molecules using 4 electrons from cytochrome c in the IMS and 4 protons from the mitochondrial matrix. The sequence is that of Cytochrome c oxidase subunit 3 (COIII) from Strongylocentrotus purpuratus (Purple sea urchin).